We begin with the raw amino-acid sequence, 77 residues long: Conotoxin ArMSGL-0143 (77 aa).

Positions Met-1 to Gln-22 are cleaved as a signal peptide. Residues Asp-23–Thr-44 constitute a propeptide that is removed on maturation. Disulfide bonds link Cys-51/Cys-63, Cys-55/Cys-71, and Cys-62/Cys-75. Phenylalanine amide is present on Phe-76.

It belongs to the conotoxin O3 superfamily. In terms of tissue distribution, expressed by the venom duct.

It localises to the secreted. This Conus arenatus (Sand-dusted cone) protein is Conotoxin ArMSGL-0143.